Reading from the N-terminus, the 430-residue chain is Glutamate-1-semialdehyde 2,1-aminomutase (430 aa).

N6-(pyridoxal phosphate)lysine is present on Lys-270.

The protein belongs to the class-III pyridoxal-phosphate-dependent aminotransferase family. HemL subfamily. Homodimer. Pyridoxal 5'-phosphate is required as a cofactor.

It localises to the cytoplasm. It carries out the reaction (S)-4-amino-5-oxopentanoate = 5-aminolevulinate. It functions in the pathway porphyrin-containing compound metabolism; protoporphyrin-IX biosynthesis; 5-aminolevulinate from L-glutamyl-tRNA(Glu): step 2/2. This chain is Glutamate-1-semialdehyde 2,1-aminomutase, found in Cupriavidus metallidurans (strain ATCC 43123 / DSM 2839 / NBRC 102507 / CH34) (Ralstonia metallidurans).